The sequence spans 329 residues: Phenylalanine--tRNA ligase alpha subunit (329 aa).

Belongs to the class-II aminoacyl-tRNA synthetase family. Phe-tRNA synthetase alpha subunit type 1 subfamily. Tetramer of two alpha and two beta subunits. It depends on Mg(2+) as a cofactor.

It localises to the cytoplasm. The enzyme catalyses tRNA(Phe) + L-phenylalanine + ATP = L-phenylalanyl-tRNA(Phe) + AMP + diphosphate + H(+). This chain is Phenylalanine--tRNA ligase alpha subunit (pheS), found in Buchnera aphidicola subsp. Acyrthosiphon pisum (strain APS) (Acyrthosiphon pisum symbiotic bacterium).